The sequence spans 696 residues: Polyribonucleotide nucleotidyltransferase (696 aa).

Mg(2+) contacts are provided by aspartate 486 and aspartate 492. The KH domain maps to 553-612 (PRITQKQIPKDRIGELIGPGGKMIRAIIEQSGSEISVDDSGKVTIASPSEESKEKAIAMI). The S1 motif domain maps to 622-690 (GKIYDGVIKR…KMGKIDLSRK (69 aa)).

Belongs to the polyribonucleotide nucleotidyltransferase family. Requires Mg(2+) as cofactor.

It localises to the cytoplasm. It carries out the reaction RNA(n+1) + phosphate = RNA(n) + a ribonucleoside 5'-diphosphate. In terms of biological role, involved in mRNA degradation. Catalyzes the phosphorolysis of single-stranded polyribonucleotides processively in the 3'- to 5'-direction. The polypeptide is Polyribonucleotide nucleotidyltransferase (Leptospira biflexa serovar Patoc (strain Patoc 1 / ATCC 23582 / Paris)).